The following is a 283-amino-acid chain: Shikimate kinase (283 aa).

Residue 86 to 96 (PIKSGLSSSSA) participates in ATP binding.

It belongs to the GHMP kinase family. Archaeal shikimate kinase subfamily.

It is found in the cytoplasm. It carries out the reaction shikimate + ATP = 3-phosphoshikimate + ADP + H(+). The protein operates within metabolic intermediate biosynthesis; chorismate biosynthesis; chorismate from D-erythrose 4-phosphate and phosphoenolpyruvate: step 5/7. This chain is Shikimate kinase, found in Methanococcus maripaludis (strain C5 / ATCC BAA-1333).